A 498-amino-acid chain; its full sequence is WD repeat-containing protein 55 homolog (498 aa).

The tract at residues 1 to 133 (MHTHNNFKTP…TFDLDEDDET (133 aa)) is disordered. 3 stretches are compositionally biased toward acidic residues: residues 12–23 (DEDELDDLDEDM), 31–48 (IEQEVLNESDSDNDEYDL), and 83–95 (SDSDDSMLDDAGD). Residues 114-123 (PSGSNRQSEA) show a composition bias toward polar residues. WD repeat units follow at residues 155–194 (KLEDFITDICFHPDRDIIALATIIGDVHLYEYDNEANKLL), 199–238 (VHSKACRDVEFTEDGRFLLTCSKDKCVMVTDMETEKLKKL), 242–280 (AHDDAINTLHVLNENLFATGDDAGTVKLWDLRTKNAIFE), 283–322 (ELEDQITQLTTNDQSKLLLATSADGYLTTFNIAARKMYVQ), 325–364 (PYEEELSCMGIYRGDSKLVVGTSKGRLYTYNWGQFGYHCD), and 409–448 (QHNMPIESLDVNSNGELIASSSHNNDVRFWNVKYFEDFGD).

The protein belongs to the WD repeat WDR55 family.

The chain is WD repeat-containing protein 55 homolog from Drosophila erecta (Fruit fly).